The primary structure comprises 206 residues: Charged multivesicular body protein 2a homolog 1 (206 aa).

The disordered stretch occupies residues 1 to 32; that stretch reads MSFFGGNKKTPEQELKDSKRELSKGQREMDRE. Basic and acidic residues predominate over residues 9–32; the sequence is KTPEQELKDSKRELSKGQREMDRE. 2 coiled-coil regions span residues 12-80 and 114-148; these read EQEL…RATK and NKQTDLVQLQKTMMEYEKQTQRVEMTEEMMQDMFE.

It belongs to the SNF7 family. As to quaternary structure, probable core component of the endosomal sorting required for transport complex III (ESCRT-III). ESCRT-III components are thought to multimerize to form a flat lattice on the perimeter membrane of the endosome.

It is found in the endosome membrane. In terms of biological role, probable core component of the endosomal sorting required for transport complex III (ESCRT-III) which is involved in multivesicular bodies (MVBs) formation and sorting of endosomal cargo proteins into MVBs. MVBs contain intraluminal vesicles (ILVs) that are generated by invagination and scission from the limiting membrane of the endosome and are delivered to lysosomes enabling degradation of membrane proteins. This chain is Charged multivesicular body protein 2a homolog 1 (chmp2a1), found in Dictyostelium discoideum (Social amoeba).